A 557-amino-acid chain; its full sequence is Dihydroxy-acid dehydratase (557 aa).

Aspartate 78 is a binding site for Mg(2+). A [2Fe-2S] cluster-binding site is contributed by cysteine 119. Mg(2+) contacts are provided by aspartate 120 and lysine 121. Residue lysine 121 is modified to N6-carboxylysine. [2Fe-2S] cluster is bound at residue cysteine 191. Residue glutamate 442 participates in Mg(2+) binding. Residue serine 468 is the Proton acceptor of the active site.

It belongs to the IlvD/Edd family. As to quaternary structure, homodimer. Requires [2Fe-2S] cluster as cofactor. Mg(2+) is required as a cofactor.

It carries out the reaction (2R)-2,3-dihydroxy-3-methylbutanoate = 3-methyl-2-oxobutanoate + H2O. The catalysed reaction is (2R,3R)-2,3-dihydroxy-3-methylpentanoate = (S)-3-methyl-2-oxopentanoate + H2O. It functions in the pathway amino-acid biosynthesis; L-isoleucine biosynthesis; L-isoleucine from 2-oxobutanoate: step 3/4. Its pathway is amino-acid biosynthesis; L-valine biosynthesis; L-valine from pyruvate: step 3/4. Functionally, functions in the biosynthesis of branched-chain amino acids. Catalyzes the dehydration of (2R,3R)-2,3-dihydroxy-3-methylpentanoate (2,3-dihydroxy-3-methylvalerate) into 2-oxo-3-methylpentanoate (2-oxo-3-methylvalerate) and of (2R)-2,3-dihydroxy-3-methylbutanoate (2,3-dihydroxyisovalerate) into 2-oxo-3-methylbutanoate (2-oxoisovalerate), the penultimate precursor to L-isoleucine and L-valine, respectively. The chain is Dihydroxy-acid dehydratase from Lachnospira eligens (strain ATCC 27750 / DSM 3376 / VPI C15-48 / C15-B4) (Eubacterium eligens).